The following is a 257-amino-acid chain: Ribosome maturation factor RimP (257 aa).

The interval 182 to 257 is disordered; that stretch reads LRRGGPPAAD…SRLKDRDSLH (76 aa). A compositionally biased stretch (acidic residues) spans 191-205; sequence DEADEAEEAEDEEVA. Residues 224-236 show a composition bias toward low complexity; that stretch reads KASPAAKPQKQAR.

This sequence belongs to the RimP family.

It localises to the cytoplasm. Its function is as follows. Required for maturation of 30S ribosomal subunits. The protein is Ribosome maturation factor RimP of Methylobacterium radiotolerans (strain ATCC 27329 / DSM 1819 / JCM 2831 / NBRC 15690 / NCIMB 10815 / 0-1).